Consider the following 298-residue polypeptide: Spermidine synthase (298 aa).

Residues 13–248 (DGWFREINNM…GSIGFVVASK (236 aa)) form the PABS domain. Gln44 contacts S-adenosyl 3-(methylsulfanyl)propylamine. Tyr74 contacts putrescine. S-adenosyl 3-(methylsulfanyl)propylamine contacts are provided by residues Gln75, Asp99, Asp119, 150–151 (DG), and Asp168. The active-site Proton acceptor is Asp168. Putrescine is bound by residues 168–171 (DSSD) and Tyr236.

Belongs to the spermidine/spermine synthase family.

It carries out the reaction S-adenosyl 3-(methylsulfanyl)propylamine + putrescine = S-methyl-5'-thioadenosine + spermidine + H(+). The protein operates within amine and polyamine biosynthesis; spermidine biosynthesis; spermidine from putrescine: step 1/1. This Schizosaccharomyces pombe (strain 972 / ATCC 24843) (Fission yeast) protein is Spermidine synthase.